The chain runs to 80 residues: U6-ctenitoxin-Pn1a (80 aa).

The N-terminal stretch at 1–21 (MWLKIQVFVLALALITLGIQA) is a signal peptide. Residues 22 to 37 (EPNSGPNNPLIQEEAR) constitute a propeptide that is removed on maturation. 4 disulfides stabilise this stretch: Cys-39/Cys-54, Cys-46/Cys-59, Cys-53/Cys-69, and Cys-61/Cys-67. Residues 72–80 (TLGDLFGRR) constitute a propeptide that is removed on maturation.

This sequence belongs to the neurotoxin 02 (plectoxin) family. 01 (Tx3) subfamily. As to expression, expressed by the venom gland.

It is found in the secreted. In terms of biological role, antagonist of L-type calcium channels (Cav1/CACNA1). This Phoneutria nigriventer (Brazilian armed spider) protein is U6-ctenitoxin-Pn1a.